Here is a 616-residue protein sequence, read N- to C-terminus: Homeodomain-interacting protein kinase 4 (616 aa).

One can recognise a Protein kinase domain in the interval 11–347 (YDIIEVLGKG…PSAALRHPFV (337 aa)). ATP-binding positions include 17–25 (LGKGTFGEV) and Lys40. Catalysis depends on Asp136, which acts as the Proton acceptor. Residues 487–616 (HKARKAPAGS…SFLQHVGGHH (130 aa)) are disordered. Polar residues predominate over residues 497-512 (KSDSNFSNLIRLSQAS). Position 512 is a phosphoserine (Ser512). Residues 542–560 (REGDGPGIKDRPMDAERPG) show a composition bias toward basic and acidic residues.

The protein belongs to the protein kinase superfamily. CMGC Ser/Thr protein kinase family. HIPK subfamily. Autophosphorylated. As to expression, expressed at moderate levels in lung and white adipose tissues and weakly in brain and liver.

The protein localises to the cytoplasm. The catalysed reaction is L-seryl-[protein] + ATP = O-phospho-L-seryl-[protein] + ADP + H(+). It carries out the reaction L-threonyl-[protein] + ATP = O-phospho-L-threonyl-[protein] + ADP + H(+). Protein kinase that phosphorylates murine TP53 at Ser-9, and thus induces TP53 repression of BIRC5 promoter. May act as a corepressor of transcription factors (Potential). The sequence is that of Homeodomain-interacting protein kinase 4 (Hipk4) from Mus musculus (Mouse).